The sequence spans 207 residues: Ribosomal RNA small subunit methyltransferase G (207 aa).

Residues Gly76, Gln81, 127-128, and Arg141 each bind S-adenosyl-L-methionine; that span reads VE.

Belongs to the methyltransferase superfamily. RNA methyltransferase RsmG family.

It is found in the cytoplasm. It carries out the reaction guanosine(527) in 16S rRNA + S-adenosyl-L-methionine = N(7)-methylguanosine(527) in 16S rRNA + S-adenosyl-L-homocysteine. In terms of biological role, specifically methylates the N7 position of guanine in position 527 of 16S rRNA. The protein is Ribosomal RNA small subunit methyltransferase G of Neisseria gonorrhoeae (strain ATCC 700825 / FA 1090).